Consider the following 230-residue polypeptide: Large ribosomal subunit protein uL1 (230 aa).

This sequence belongs to the universal ribosomal protein uL1 family. In terms of assembly, part of the 50S ribosomal subunit.

Binds directly to 23S rRNA. The L1 stalk is quite mobile in the ribosome, and is involved in E site tRNA release. Its function is as follows. Protein L1 is also a translational repressor protein, it controls the translation of the L11 operon by binding to its mRNA. The protein is Large ribosomal subunit protein uL1 of Staphylococcus aureus (strain Mu3 / ATCC 700698).